The chain runs to 127 residues: MMKLVIALCLIGISAAYVVPVYYEIYPEDATFDEADIEPQLSPAELHHGSIRERRSLQPGAPSFPMPGSQLPTSVSGNVEKQGRNTIATIDAQHKTDRYDVRGTWTKVVDGPGRSKPNFRIGGSYRW.

An N-terminal signal peptide occupies residues 1–15 (MMKLVIALCLIGISA). Residues 16–55 (AYVVPVYYEIYPEDATFDEADIEPQLSPAELHHGSIRERR) constitute a propeptide that is removed on maturation. Residues 43 to 84 (PAELHHGSIRERRSLQPGAPSFPMPGSQLPTSVSGNVEKQGR) form a disordered region. The segment covering 45–56 (ELHHGSIRERRS) has biased composition (basic and acidic residues). The span at 70 to 84 (QLPTSVSGNVEKQGR) shows a compositional bias: polar residues.

The protein belongs to the coleoptericin family. As to expression, hemolymph.

Its subcellular location is the secreted. Its function is as follows. Antibacterial activity against Gram-negative bacteria but not against Gram-positive bacteria. This is Holotricin-2 from Holotrichia diomphalia (Korean black chafer).